The sequence spans 218 residues: GTP cyclohydrolase 1 (218 aa).

Zn(2+) contacts are provided by Cys109, His112, and Cys180.

The protein belongs to the GTP cyclohydrolase I family. Toroid-shaped homodecamer, composed of two pentamers of five dimers.

It catalyses the reaction GTP + H2O = 7,8-dihydroneopterin 3'-triphosphate + formate + H(+). Its pathway is cofactor biosynthesis; 7,8-dihydroneopterin triphosphate biosynthesis; 7,8-dihydroneopterin triphosphate from GTP: step 1/1. The protein is GTP cyclohydrolase 1 of Haemophilus influenzae (strain 86-028NP).